Reading from the N-terminus, the 361-residue chain is Protein Csal_2339 (361 aa).

S91 (proton acceptor) is an active-site residue. Residues 92–93 (GS) and 259–260 (GT) contribute to the substrate site.

This sequence belongs to the proline racemase family.

The catalysed reaction is trans-4-hydroxy-L-proline = cis-4-hydroxy-D-proline. Its function is as follows. In vitro, catalyzes the epimerization of trans-4-hydroxy-L-proline (t4LHyp) to cis-4-hydroxy-D-proline (c4DHyp), albeit with very low efficiency. The physiological substrate may be different. Displays neither proline racemase activity nor t3LHyp dehydratase activity. The protein is Protein Csal_2339 of Chromohalobacter salexigens (strain ATCC BAA-138 / DSM 3043 / CIP 106854 / NCIMB 13768 / 1H11).